We begin with the raw amino-acid sequence, 351 residues long: MSDPVFIVPKAGLTLGAVAEACGVPLPEGADPSQPVTGAAPLETAGPSDLAYMDNARYGDALGTTRALACLVSPRFAPRVPAGTIALVTRDPYRAYAGLLARLYEEAMRPGSLFAASGVSPGAHVHPQARLEDGVRVDPGAVVGPGAEIGSGTVLGPNAVIGPNVRIGRDCSIGSGATLTHALVGNRVIIHPGARIGQDGFGFAMGAGGHIKVPQVGRVIIQDDVEIGANTTIDRGASRDTVVGEGTKIDNLVQIAHNVVIGRHCVIVSGVGISGSTTLEDYVVLGGQVGVVGHLRIGMGSQIAGSSNVNRDVPPGSRWGGTPAKPVRTWFREMTTLARLAERGGKDDGEG.

The active-site Proton acceptor is H257.

Belongs to the transferase hexapeptide repeat family. LpxD subfamily. Homotrimer.

The catalysed reaction is a UDP-3-O-[(3R)-3-hydroxyacyl]-alpha-D-glucosamine + a (3R)-hydroxyacyl-[ACP] = a UDP-2-N,3-O-bis[(3R)-3-hydroxyacyl]-alpha-D-glucosamine + holo-[ACP] + H(+). The protein operates within bacterial outer membrane biogenesis; LPS lipid A biosynthesis. Functionally, catalyzes the N-acylation of UDP-3-O-acylglucosamine using 3-hydroxyacyl-ACP as the acyl donor. Is involved in the biosynthesis of lipid A, a phosphorylated glycolipid that anchors the lipopolysaccharide to the outer membrane of the cell. The chain is UDP-3-O-acylglucosamine N-acyltransferase from Methylorubrum populi (strain ATCC BAA-705 / NCIMB 13946 / BJ001) (Methylobacterium populi).